Reading from the N-terminus, the 198-residue chain is Recombination protein RecR (198 aa).

Residues 57 to 72 (CSVCGNLTDDDPCLIC) form a C4-type zinc finger. Residues 80–175 (SVILVVEDSK…KVTRLARGLA (96 aa)) enclose the Toprim domain.

The protein belongs to the RecR family.

May play a role in DNA repair. It seems to be involved in an RecBC-independent recombinational process of DNA repair. It may act with RecF and RecO. The sequence is that of Recombination protein RecR from Streptococcus agalactiae serotype Ia (strain ATCC 27591 / A909 / CDC SS700).